The following is a 418-amino-acid chain: MLHPRARTMLLLSLPAVAIGIASSLILIVVMKIASVLQNLLWQRLPGTLGIAQDSPFWIIAILTLTGIAVGLVIRFSQGHAGPDPACEPLIGAPVPPSALLGLIVALILGLAGGVSLGPEHPIMTVNIALAVAIGARLLPRVNRMEWTILASAGTIGALFGTPVAAALIFSQTLNGSSEVPLWDRLFAPLMAAAAGALTTGLFFHPHFSLPIAHYGKMEMTDILSGAIVAAIAIAAGMVAVWCLPRLHAMMHQMKNPVLVLGIGGFILGILGVMGGPVSLFKGLDEMQQMVANQAFSTSDYFLLAVIKLAALVVAAASGFRGGRIFPAVFVGVALGLMLHEHVPAVPAAITVSCAILGIVLVVTRDGWLSLFMAAVVVPNTTLLPLLCIVMLPAWLLLAGKPMMMVNRPKQQPPHDNV.

A run of 12 helical transmembrane segments spans residues 10–30 (LLLS…LIVV), 54–74 (DSPF…GLVI), 99–119 (ALLG…SLGP), 120–140 (EHPI…RLLP), 149–169 (ILAS…AALI), 186–206 (LFAP…FFHP), 223–243 (ILSG…AVWC), 258–278 (VLVL…GGPV), 300–320 (DYFL…ASGF), 322–342 (GGRI…LHEH), 343–363 (VPAV…VLVV), and 371–391 (LFMA…CIVM).

It belongs to the chloride channel (TC 2.A.49) family.

Its subcellular location is the cell membrane. The protein is Putative ion-transport protein YfeO of Escherichia coli O17:K52:H18 (strain UMN026 / ExPEC).